The chain runs to 358 residues: HLA class I histocompatibility antigen, alpha chain E (358 aa).

The first 21 residues, 1–21, serve as a signal peptide directing secretion; sequence MVDGTLLLLLSEALALTQTWA. An alpha-1 region spans residues 22–111; that stretch reads GSHSLKYFHT…LRGYYNQSEA (90 aa). Residues 22 to 305 lie on the Extracellular side of the membrane; it reads GSHSLKYFHT…KPASQPTIPI (284 aa). 5 residues coordinate a peptide antigen: Tyr-28, Glu-84, Ser-87, Asn-98, and Tyr-105. The N-linked (GlcNAc...) asparagine glycan is linked to Asn-107. The tract at residues 112-203 is alpha-2; sequence GSHTLQWMHG…EKGKETLLHL (92 aa). Cys-122 and Cys-185 are oxidised to a cystine. A peptide antigen contacts are provided by Ser-164, Lys-167, Gln-177, Tyr-180, and Tyr-192. The segment at 204 to 295 is alpha-3; the sequence is EPPKTHVTHH…GLPEPVTLRW (92 aa). Positions 206-294 constitute an Ig-like C1-type domain; sequence PKTHVTHHPI…EGLPEPVTLR (89 aa). Cys-224 and Cys-280 are oxidised to a cystine. Residues 296–305 form a connecting peptide region; it reads KPASQPTIPI. The chain crosses the membrane as a helical span at residues 306–329; the sequence is VGIIAGLVLLGSVVSGAVVAAVIW. The Cytoplasmic segment spans residues 330 to 358; sequence RKKSSGGKGGSYSKAEWSDSAQGSESHSL. The disordered stretch occupies residues 333–358; that stretch reads SSGGKGGSYSKAEWSDSAQGSESHSL. Residues 348 to 358 are compositionally biased toward polar residues; sequence DSAQGSESHSL. Ser-353 carries the post-translational modification Phosphoserine.

This sequence belongs to the MHC class I family. In terms of assembly, forms a heterotrimer with B2M and a self- or a pathogen-derived peptide (peptide-bound HLA-E-B2M). Similarly to MHC class Ia assembly, HLA-E-B2M heterodimer interacts with components of the antigen processing machinery TAPBP and TAP1-TAP2 complex; this interaction is required for peptide loading and translocation to the cell surface. Interacts with CALCR; this interaction is required for appropriate folding. The optimum binding peptide is a nonamer (VL9) that is primarily derived from amino-acid residues 3-11 of the signal sequences of most HLA-A, -B, -C and -G molecules. The VL9 peptide anchors to five main sites in the peptide-binding groove of HLA-E. Peptide-bound HLA-E-B2M complex interacts with KLRD1-KLRC1 receptor on NK cells. Binds with lower affinity to activating KLRD1-KLRC2. The common subunit KLRC1 plays a prominent role in directly interacting with HLA-E. Peptide-bound HLA-E-B2M interacts with the alpha-beta TCR on unconventional CD8+ T cells. Peptide-free HLA-E interacts with HLA-F-B2M complex; this interaction may regulate the intracellular trafficking and the stability of peptide-free MHC class I open conformers (OCs). Post-translationally, N-glycosylated. The soluble form (sHLA-E) can be partly produced by proteolytic cleavage at the cell surface (shedding) by a matrix metalloproteinase. Alternative splicing is also suggested as a mechanism for generation of sHLA-E, although it remains to be proved. In terms of tissue distribution, expressed in secretory endometrial cells during pregnancy (at protein level). The expression in nonlymphoid tissues is restricted to endothelial cells from all types of vessels, including arteries, veins, capillaries, and lymphatics (at protein level). In lymphoid organs, it is mainly expressed in endothelial venules, B and T cells, monocytes, macrophages, NK cells and megakaryocytes (at protein level).

It localises to the cell membrane. The protein resides in the golgi apparatus membrane. The protein localises to the secreted. Non-classical major histocompatibility class Ib molecule involved in immune self-nonself discrimination. In complex with B2M/beta-2-microglobulin binds nonamer self-peptides derived from the signal sequence of classical MHC class Ia molecules (VL9 peptides - VMAPRT[V/L][L/V/I/F]L). Peptide-bound HLA-E-B2M heterotrimeric complex primarily functions as a ligand for natural killer (NK) cell inhibitory receptor KLRD1-KLRC1, enabling NK cells to monitor the expression of other MHC class I molecules in healthy cells and to tolerate self. Upon cellular stress, preferentially binds signal sequence-derived peptides from stress-induced chaperones and is no longer recognized by NK cell inhibitory receptor KLRD1-KLRC1, resulting in impaired protection from NK cells. Binds signal sequence-derived peptides from non-classical MHC class Ib HLA-G molecules and acts as a ligand for NK cell activating receptor KLRD1-KLRC2, likely playing a role in the generation and effector functions of adaptive NK cells and in maternal-fetal tolerance during pregnancy. Besides self-peptides, can also bind and present pathogen-derived peptides conformationally similar to VL9 peptides to alpha-beta T cell receptor (TCR) on unconventional CD8-positive cytotoxic T cells, ultimately triggering antimicrobial immune response. Presents HIV gag peptides (immunodominant KAFSPEVIPMF and subdominant KALGPAATL epitopes) predominantly to CD8-positive T cell clones expressing a TRAV17-containing TCR, triggering HLA-E-restricted T cell responses. Presents mycobacterial peptides to HLA-E-restricted CD8-positive T cells eliciting both cytotoxic and immunoregulatory functions. In terms of biological role, (Microbial infection) Viruses like human cytomegalovirus have evolved an escape mechanism whereby virus-induced down-regulation of host MHC class I molecules is coupled to the binding of viral peptides to HLA-E, restoring HLA-E expression and inducing HLA-E-dependent NK cell immune tolerance to infected cells. Functionally, (Microbial infection) May bind HIV-1 gag/Capsid protein p24-derived peptide (AISPRTLNA) on infected cells and may inhibit NK cell cytotoxicity, a mechanism that allows HIV-1 to escape immune recognition. Its function is as follows. (Microbial infection) Upon SARS-CoV-2 infection, may contribute to functional exhaustion of cytotoxic NK cells and CD8-positive T cells. Binds SARS-CoV-2 S/Spike protein S1-derived peptide (LQPRTFLL) expressed on the surface of lung epithelial cells, inducing NK cell exhaustion and dampening of antiviral immune surveillance. The sequence is that of HLA class I histocompatibility antigen, alpha chain E from Homo sapiens (Human).